A 285-amino-acid chain; its full sequence is Bifunctional protein FolD (285 aa).

Residues 166-168, serine 191, and threonine 232 contribute to the NADP(+) site; that span reads GRS.

This sequence belongs to the tetrahydrofolate dehydrogenase/cyclohydrolase family. As to quaternary structure, homodimer.

The enzyme catalyses (6R)-5,10-methylene-5,6,7,8-tetrahydrofolate + NADP(+) = (6R)-5,10-methenyltetrahydrofolate + NADPH. The catalysed reaction is (6R)-5,10-methenyltetrahydrofolate + H2O = (6R)-10-formyltetrahydrofolate + H(+). The protein operates within one-carbon metabolism; tetrahydrofolate interconversion. Catalyzes the oxidation of 5,10-methylenetetrahydrofolate to 5,10-methenyltetrahydrofolate and then the hydrolysis of 5,10-methenyltetrahydrofolate to 10-formyltetrahydrofolate. The protein is Bifunctional protein FolD of Chloroflexus aurantiacus (strain ATCC 29366 / DSM 635 / J-10-fl).